The chain runs to 149 residues: Succinate dehydrogenase assembly factor 2, mitochondrial (149 aa).

The protein belongs to the SDHAF2 family. As to quaternary structure, interacts with the flavoprotein subunit within the SDH catalytic dimer.

Its subcellular location is the mitochondrion matrix. Plays an essential role in the assembly of succinate dehydrogenase (SDH), an enzyme complex (also referred to as respiratory complex II) that is a component of both the tricarboxylic acid (TCA) cycle and the mitochondrial electron transport chain, and which couples the oxidation of succinate to fumarate with the reduction of ubiquinone (coenzyme Q) to ubiquinol. Required for flavinylation (covalent attachment of FAD) of the flavoprotein subunit of the SDH catalytic dimer. The polypeptide is Succinate dehydrogenase assembly factor 2, mitochondrial (Scheffersomyces stipitis (strain ATCC 58785 / CBS 6054 / NBRC 10063 / NRRL Y-11545) (Yeast)).